A 147-amino-acid polypeptide reads, in one-letter code: Protein phosphatase 1 regulatory subunit 14A (147 aa).

A compositionally biased stretch (basic residues) spans 1 to 11 (MAAQRLGKRVL). Residues 1 to 37 (MAAQRLGKRVLSKLQSPSRARGPGGSPGGLQKRHARV) form a disordered region. S26 carries the post-translational modification Phosphoserine. The tract at residues 35-120 (ARVTVKYDRR…LLVKLRGLHK (86 aa)) is inhibitory. T38 is modified (phosphothreonine). Positions 118-147 (LHKQPGLRQPSPSGDGSLSPRQDRARTAPP) are disordered. Positions 127–137 (PSPSGDGSLSP) are enriched in polar residues. A phosphoserine mark is found at S128, S134, and S136. Positions 138 to 147 (RQDRARTAPP) are enriched in basic and acidic residues.

The protein belongs to the PP1 inhibitor family. In terms of processing, phosphorylation of Thr-38 induces a conformation change. In terms of tissue distribution, detected in aorta smooth muscle and bladder.

Its subcellular location is the cytoplasm. In terms of biological role, inhibitor of PPP1CA. Has over 1000-fold higher inhibitory activity when phosphorylated, creating a molecular switch for regulating the phosphorylation status of PPP1CA substrates and smooth muscle contraction. The sequence is that of Protein phosphatase 1 regulatory subunit 14A (CPI17) from Sus scrofa (Pig).